Consider the following 115-residue polypeptide: NADH-ubiquinone oxidoreductase chain 3 (115 aa).

3 helical membrane-spanning segments follow: residues 3-23, 55-75, and 84-104; these read FMLT…IAFW, FFLV…LLPL, and LEVM…SLAY.

It belongs to the complex I subunit 3 family. Core subunit of respiratory chain NADH dehydrogenase (Complex I) which is composed of 45 different subunits. Interacts with TMEM186. Interacts with TMEM242.

It is found in the mitochondrion inner membrane. It carries out the reaction a ubiquinone + NADH + 5 H(+)(in) = a ubiquinol + NAD(+) + 4 H(+)(out). Its function is as follows. Core subunit of the mitochondrial membrane respiratory chain NADH dehydrogenase (Complex I) which catalyzes electron transfer from NADH through the respiratory chain, using ubiquinone as an electron acceptor. Essential for the catalytic activity of complex I. In Rhinolophus pumilus (Horseshoe bat), this protein is NADH-ubiquinone oxidoreductase chain 3.